A 100-amino-acid polypeptide reads, in one-letter code: MELTPREKDKLLLFTAALLAERRLARGLKLNYPEAVALISAAVLEGARDGRTVAELMSLGREVLTREQVMPGIAEMLHDVQVEATFPDGTKLVTVHDPIV.

It belongs to the urease gamma subunit family. In terms of assembly, heterotrimer of UreA (gamma), UreB (beta) and UreC (alpha) subunits. Three heterotrimers associate to form the active enzyme.

The protein localises to the cytoplasm. The enzyme catalyses urea + 2 H2O + H(+) = hydrogencarbonate + 2 NH4(+). It participates in nitrogen metabolism; urea degradation; CO(2) and NH(3) from urea (urease route): step 1/1. This chain is Urease subunit gamma, found in Pseudomonas putida (strain ATCC 700007 / DSM 6899 / JCM 31910 / BCRC 17059 / LMG 24140 / F1).